The primary structure comprises 153 residues: Large ribosomal subunit protein uL15 (153 aa).

Residues 1–40 (MTDKKRRQRGSRTHGGGTHKNRRGAGNRGGRGRAGRKKHE) are compositionally biased toward basic residues. Residues 1-60 (MTDKKRRQRGSRTHGGGTHKNRRGAGNRGGRGRAGRKKHEQHNYEDVGKSGFKRPEKTDR) are disordered. Residues 41-60 (QHNYEDVGKSGFKRPEKTDR) show a composition bias toward basic and acidic residues.

This sequence belongs to the universal ribosomal protein uL15 family. In terms of assembly, part of the 50S ribosomal subunit.

In terms of biological role, binds to the 23S rRNA. This chain is Large ribosomal subunit protein uL15, found in Halobacterium salinarum (strain ATCC 29341 / DSM 671 / R1).